We begin with the raw amino-acid sequence, 370 residues long: Glutamate 5-kinase (370 aa).

Lys13 serves as a coordination point for ATP. Substrate-binding residues include Ser54, Asp140, and Asn152. ATP contacts are provided by residues 172–173 (SD) and 214–220 (SGGMVTK). The region spanning 278 to 355 (TGTLVLDAGA…GEIEAILGFR (78 aa)) is the PUA domain.

The protein belongs to the glutamate 5-kinase family.

The protein resides in the cytoplasm. The enzyme catalyses L-glutamate + ATP = L-glutamyl 5-phosphate + ADP. The protein operates within amino-acid biosynthesis; L-proline biosynthesis; L-glutamate 5-semialdehyde from L-glutamate: step 1/2. In terms of biological role, catalyzes the transfer of a phosphate group to glutamate to form L-glutamate 5-phosphate. The chain is Glutamate 5-kinase from Paramagnetospirillum magneticum (strain ATCC 700264 / AMB-1) (Magnetospirillum magneticum).